A 582-amino-acid polypeptide reads, in one-letter code: MKYRTHKCNELSLDHVGEHVRLSGWVHRYRNHGGVVFIDLRDCFGITQIVCRQEENPELHQLMDQVRSEWVLCVEGLVCARLEGMENPNLVTGSIEVEVSSLEVLSRAQNLPFSISDEHINVNEELRLTYRYLDMRRGDILDRLMCRHKVMLACRQYLDEQGFTEVVTPILGKSTPEGARDYLVPSRIYPGNFYALPQSPQLFKQILMVGGLDRYFQIATCFRDEDLRADRQPEFTQIDMEMSFGGPEDLFPVVEELVARLFAVKGIELKAPFLRMTYQEAKDSYGTDKPDLRFGLRLKNCCEYARKFTFSIFLDQLAYGGTVKGFCVPGGADMSRKQLDIYTDFVKRYGAMGLVWIKKQDGGVSSNVAKFASEDVFQEMFEAFEAKDQDILLLIAAPEAVANQALDHLRRLIARERQLYDSTQYNFVWITDFPLFAKEEGELCPEHHPFTAPLDEDISLLDSDPFAVRSSSYDLVLNGYEIASGSQRIHNPDLQNKIFALLKLSQESVKEKFGFFIDALSFGTPPHLGIALGLDRIMMVLTGAETIREVIAFPKTQKAGDLMMSAPSEILPIQLKELGLKL.

L-aspartate is bound at residue glutamate 177. An aspartate region spans residues 201-204 (QLFK). An L-aspartate-binding site is contributed by arginine 223. ATP contacts are provided by residues 223–225 (RDE) and glutamine 232. Residue histidine 447 coordinates L-aspartate. Glutamate 481 is a binding site for ATP. Position 488 (arginine 488) interacts with L-aspartate. 533-536 (GLDR) contacts ATP.

Belongs to the class-II aminoacyl-tRNA synthetase family. Type 1 subfamily. As to quaternary structure, homodimer.

The protein resides in the cytoplasm. It carries out the reaction tRNA(Asx) + L-aspartate + ATP = L-aspartyl-tRNA(Asx) + AMP + diphosphate. Functionally, aspartyl-tRNA synthetase with relaxed tRNA specificity since it is able to aspartylate not only its cognate tRNA(Asp) but also tRNA(Asn). Reaction proceeds in two steps: L-aspartate is first activated by ATP to form Asp-AMP and then transferred to the acceptor end of tRNA(Asp/Asn). In Chlamydia trachomatis serovar A (strain ATCC VR-571B / DSM 19440 / HAR-13), this protein is Aspartate--tRNA(Asp/Asn) ligase.